The chain runs to 368 residues: Phospho-N-acetylmuramoyl-pentapeptide-transferase (368 aa).

The next 10 membrane-spanning stretches (helical) occupy residues 31 to 51 (LTSMLVTFWFGHKIIDFLYGL), 73 to 93 (TMGGLLIIGSLLISVLLWGNL), 98 to 118 (VILLSVFSLSFSVLGFADDYM), 134 to 154 (FILSILISFIFCILFFYYTGT), 175 to 195 (GPVIALGIIAIPFSILVIIGS), 213 to 233 (VLISVMTLGVIAYFSGTPIVA), 249 to 269 (VFLSALTGALFGFLWFNAHPA), 271 to 291 (VFMGDTGSLFLGATLGMIVIL), 296 to 316 (ILLLILGAIFVSEALSVILQV), and 345 to 365 (KIVIRFWIIAVILAIISLSTL).

It belongs to the glycosyltransferase 4 family. MraY subfamily. It depends on Mg(2+) as a cofactor.

Its subcellular location is the cell inner membrane. It carries out the reaction UDP-N-acetyl-alpha-D-muramoyl-L-alanyl-gamma-D-glutamyl-meso-2,6-diaminopimeloyl-D-alanyl-D-alanine + di-trans,octa-cis-undecaprenyl phosphate = di-trans,octa-cis-undecaprenyl diphospho-N-acetyl-alpha-D-muramoyl-L-alanyl-D-glutamyl-meso-2,6-diaminopimeloyl-D-alanyl-D-alanine + UMP. It functions in the pathway cell wall biogenesis; peptidoglycan biosynthesis. Its function is as follows. Catalyzes the initial step of the lipid cycle reactions in the biosynthesis of the cell wall peptidoglycan: transfers peptidoglycan precursor phospho-MurNAc-pentapeptide from UDP-MurNAc-pentapeptide onto the lipid carrier undecaprenyl phosphate, yielding undecaprenyl-pyrophosphoryl-MurNAc-pentapeptide, known as lipid I. This chain is Phospho-N-acetylmuramoyl-pentapeptide-transferase, found in Leptospira interrogans serogroup Icterohaemorrhagiae serovar copenhageni (strain Fiocruz L1-130).